A 110-amino-acid polypeptide reads, in one-letter code: UPF0122 protein SP70585_1353 (110 aa).

The protein belongs to the UPF0122 family.

In terms of biological role, might take part in the signal recognition particle (SRP) pathway. This is inferred from the conservation of its genetic proximity to ftsY/ffh. May be a regulatory protein. The chain is UPF0122 protein SP70585_1353 from Streptococcus pneumoniae (strain 70585).